The following is a 443-amino-acid chain: Xaa-Pro dipeptidase (443 aa).

5 residues coordinate Mn(2+): aspartate 246, aspartate 257, histidine 339, glutamate 384, and glutamate 423.

Belongs to the peptidase M24B family. Bacterial-type prolidase subfamily. Mn(2+) serves as cofactor.

It carries out the reaction Xaa-L-Pro dipeptide + H2O = an L-alpha-amino acid + L-proline. In terms of biological role, splits dipeptides with a prolyl residue in the C-terminal position. The chain is Xaa-Pro dipeptidase from Pectobacterium atrosepticum (strain SCRI 1043 / ATCC BAA-672) (Erwinia carotovora subsp. atroseptica).